A 72-amino-acid polypeptide reads, in one-letter code: Translation initiation factor IF-1 (72 aa).

The S1-like domain maps to 1–72; sequence MAKDNVIEIE…SKGRITYRFK (72 aa).

The protein belongs to the IF-1 family. Component of the 30S ribosomal translation pre-initiation complex which assembles on the 30S ribosome in the order IF-2 and IF-3, IF-1 and N-formylmethionyl-tRNA(fMet); mRNA recruitment can occur at any time during PIC assembly.

Its subcellular location is the cytoplasm. Functionally, one of the essential components for the initiation of protein synthesis. Stabilizes the binding of IF-2 and IF-3 on the 30S subunit to which N-formylmethionyl-tRNA(fMet) subsequently binds. Helps modulate mRNA selection, yielding the 30S pre-initiation complex (PIC). Upon addition of the 50S ribosomal subunit IF-1, IF-2 and IF-3 are released leaving the mature 70S translation initiation complex. The polypeptide is Translation initiation factor IF-1 (Pediococcus pentosaceus (strain ATCC 25745 / CCUG 21536 / LMG 10740 / 183-1w)).